The sequence spans 335 residues: Biotin synthase (335 aa).

One can recognise a Radical SAM core domain in the interval 47–276 (FYGKKVKLNM…SKEIRISGGR (230 aa)). [4Fe-4S] cluster is bound by residues C65, C69, and C72. [2Fe-2S] cluster contacts are provided by C109, C141, C201, and R271.

This sequence belongs to the radical SAM superfamily. Biotin synthase family. As to quaternary structure, homodimer. It depends on [4Fe-4S] cluster as a cofactor. [2Fe-2S] cluster serves as cofactor.

It catalyses the reaction (4R,5S)-dethiobiotin + (sulfur carrier)-SH + 2 reduced [2Fe-2S]-[ferredoxin] + 2 S-adenosyl-L-methionine = (sulfur carrier)-H + biotin + 2 5'-deoxyadenosine + 2 L-methionine + 2 oxidized [2Fe-2S]-[ferredoxin]. It functions in the pathway cofactor biosynthesis; biotin biosynthesis; biotin from 7,8-diaminononanoate: step 2/2. Its function is as follows. Catalyzes the conversion of dethiobiotin (DTB) to biotin by the insertion of a sulfur atom into dethiobiotin via a radical-based mechanism. The polypeptide is Biotin synthase (Bacillus subtilis (strain 168)).